A 180-amino-acid chain; its full sequence is Adenine phosphoribosyltransferase (180 aa).

This sequence belongs to the purine/pyrimidine phosphoribosyltransferase family. Homodimer.

It is found in the cytoplasm. It catalyses the reaction AMP + diphosphate = 5-phospho-alpha-D-ribose 1-diphosphate + adenine. It participates in purine metabolism; AMP biosynthesis via salvage pathway; AMP from adenine: step 1/1. Functionally, catalyzes a salvage reaction resulting in the formation of AMP, that is energically less costly than de novo synthesis. In Haemophilus influenzae (strain PittEE), this protein is Adenine phosphoribosyltransferase.